A 237-amino-acid chain; its full sequence is Putative HTH-type transcriptional regulator ycf28 (237 aa).

The region spanning 155–228 (KSITNRLISL…KKKVIIHDPI (74 aa)) is the HTH crp-type domain. The segment at residues 188–207 (HKVLAQIIGSNRVSITRIIS) is a DNA-binding region (H-T-H motif).

The protein resides in the plastid. The protein localises to the chloroplast. The protein is Putative HTH-type transcriptional regulator ycf28 (ycf28) of Porphyra purpurea (Red seaweed).